Consider the following 140-residue polypeptide: Protein archease (140 aa).

Ca(2+)-binding residues include D12, D139, and L140.

It belongs to the archease family.

In terms of biological role, activates the tRNA-splicing ligase complex by facilitating the enzymatic turnover of catalytic subunit RtcB. Acts by promoting the guanylylation of RtcB, a key intermediate step in tRNA ligation. Can also alter the NTP specificity of RtcB such that ATP, dGTP or ITP is used efficiently. May also act as a chaperone or modulator of proteins involved in DNA or RNA processing. In Methanothermobacter thermautotrophicus (strain ATCC 29096 / DSM 1053 / JCM 10044 / NBRC 100330 / Delta H) (Methanobacterium thermoautotrophicum), this protein is Protein archease.